Reading from the N-terminus, the 746-residue chain is MAEAVERTDEMVREYLLFRGFTHTLRQLDAEIKADKEKGFRVDKIVDQLQQLMQVYDLAALRDYWNYLERRLFSRLEDVYRPTINKLKTSLFRFYLVYTIQTNRSDKAQEFFAKQASELQNQAEWKDWFVLPFLPSPDTNPTFATYFSRQWADTFIVSLHNFLSVLFQCMPVPVILNFDAECQRTNQVQEENEVLRQKLFALQAEIHRLKKEEQQPEEEEALVQHKLPPYVSNMDRLGDSELAMVCSQRNASLSQSPRVGFLSSLLPQSKKSPSRLSPAQGPPQTQSSAKKESFGSQTTKGREPAGAPKDGKSLFGGLAPGESSWSQHRQRRLQDHGKERKELLSMTLQCAEKKPEAGGPEAEPCPEPHVEALETLTRVPTAGPEGGGVRPEQPFIVLGQEEYGEHHSSIMHCRVDCSGRRVASLDVDGVIKVWSFNPIMQTKASSISKSPLLSLEWATKRDRLLLLGSGVGTVRLYDTEAKKNLCEININDDMPRILSLACSPSGASFVCSAAASSLTAHVDVLAPDIGSRGTNQVPGRLLLWDTKTMKQQLQFSLDPEPIAINCTAFNHNGNLLVTGAADGVIRLFDMQQHECAMSWKAHCGEVYSVEFSYDENTVYSIGEDGKFIQWNIHKSGLKVSEYGLPADATGPFVLSGYSGYKQVQVPRGRLFAFDSEGNYMLTCSATGGVIYKLGGDDKVLESCVSLGGHRAPVVTVDWSTAMDCGTCLTASMDGKIKLTTLLAHKV.

The stretch at 183 to 215 forms a coiled coil; it reads QRTNQVQEENEVLRQKLFALQAEIHRLKKEEQQ. Phosphoserine is present on serine 256. Residues 265-278 show a composition bias toward low complexity; it reads LLPQSKKSPSRLSP. Residues 265 to 336 are disordered; that stretch reads LLPQSKKSPS…QHRQRRLQDH (72 aa). Residues 282-299 show a composition bias toward polar residues; that stretch reads PPQTQSSAKKESFGSQTT. Residues serine 288 and serine 293 each carry the phosphoserine modification. 7 WD repeats span residues 405 to 444, 447 to 487, 514 to 554, 559 to 598, 601 to 640, 663 to 701, and 708 to 746; these read EHHSSIMHCRVDCSGRRVASLDVDGVIKVWSFNPIMQTKA, ISKS…NLCE, AASS…QQLQ, PEPIAINCTAFNHNGNLLVTGAADGVIRLFDMQQHECAMS, AHCGEVYSVEFSYDENTVYSIGEDGKFIQWNIHKSGLKVS, VQVPRGRLFAFDSEGNYMLTCSATGGVIYKLGGDDKVLE, and GHRAPVVTVDWSTAMDCGTCLTASMDGKIKLTTLLAHKV.

This sequence belongs to the WD repeat WDR91 family. Interacts with WDR81; involved in early to late endosome cargo transport. Interacts with BECN1; negatively regulates the PI3 kinase/PI3K activity associated with endosomal membranes.

It is found in the early endosome membrane. Its subcellular location is the late endosome membrane. Functions as a negative regulator of the PI3 kinase/PI3K activity associated with endosomal membranes via BECN1, a core subunit of the PI3K complex. By modifying the phosphatidylinositol 3-phosphate/PtdInsP3 content of endosomal membranes may regulate endosome fusion, recycling, sorting and early to late endosome transport. It is for instance, required for the delivery of cargos like BST2/tetherin from early to late endosome and thereby participates indirectly to their degradation by the lysosome. May play a role in meiosis. This Bos taurus (Bovine) protein is WD repeat-containing protein 91.